We begin with the raw amino-acid sequence, 303 residues long: Hemolysin E (303 aa).

The cysteines at positions 87 and 285 are disulfide-linked. The chain crosses the membrane as a helical span at residues 179 to 199 (AGAAAGIVAGPFGLIISYSIA).

Belongs to the hemolysin E family. Monomer and oligomer. In periplasm, it is present as a monomer, while in outer membrane vesicles, it oligomerizes to form a pore structure that is active. The pore is formed by a dodecamer. In terms of processing, in periplasm, it forms a disulfide bond, which prevents the oligomerization. In outer membrane vesicles, the redox status prevents formation of the disulfide bond, leading to oligomerization and pore formation.

Its subcellular location is the secreted. It is found in the periplasm. The protein resides in the host cell membrane. Functionally, toxin, which has some hemolytic activity towards mammalian cells. Acts by forming a pore-like structure upon contact with mammalian cells. The chain is Hemolysin E (hlyE) from Salmonella paratyphi A (strain ATCC 9150 / SARB42).